A 199-amino-acid polypeptide reads, in one-letter code: HTH-type transcriptional regulator BetI (199 aa).

The 61-residue stretch at 8–68 folds into the HTH tetR-type domain; it reads EIRKPQLVKA…ETMREILRQL (61 aa). The segment at residues 31–50 is a DNA-binding region (H-T-H motif); it reads SISLISKEAGVSTGIINHYF.

The protein operates within amine and polyamine biosynthesis; betaine biosynthesis via choline pathway [regulation]. Functionally, repressor involved in the biosynthesis of the osmoprotectant glycine betaine. It represses transcription of the choline transporter BetT and the genes of BetAB involved in the synthesis of glycine betaine. This chain is HTH-type transcriptional regulator BetI, found in Vibrio campbellii (strain ATCC BAA-1116).